An 874-amino-acid polypeptide reads, in one-letter code: Putative disease resistance protein At5g05400 (874 aa).

Residues 22–74 are a coiled coil; that stretch reads LSRNQNRFRNLVDHVAALKKTVRQLEARRDDLLKRIKVQEDRGLNLLDEVQQW. One can recognise an NB-ARC domain in the interval 139-434; it reads AQKGPIPKVE…GQGIILGSKG (296 aa). Residue 182 to 189 coordinates ATP; sequence GMGGVGKT. 7 LRR repeats span residues 483–505, 506–527, 528–548, 552–574, 575–597, 598–620, and 621–642; these read QKNV…EDQK, AVRR…LHCP, KLET…EFLS, ILMV…SPLY, SLRF…YALR, NLLY…HDLP, and NLEV…VRQI.

This sequence belongs to the disease resistance NB-LRR family.

Potential disease resistance protein. This is Putative disease resistance protein At5g05400 from Arabidopsis thaliana (Mouse-ear cress).